Here is a 66-residue protein sequence, read N- to C-terminus: Large ribosomal subunit protein bL35 (66 aa).

The interval 20-40 (GKVKHAQRGKRHGMIKRTKKQ) is disordered.

It belongs to the bacterial ribosomal protein bL35 family.

The sequence is that of Large ribosomal subunit protein bL35 from Nitrobacter winogradskyi (strain ATCC 25391 / DSM 10237 / CIP 104748 / NCIMB 11846 / Nb-255).